Consider the following 230-residue polypeptide: Ribose-5-phosphate isomerase A (230 aa).

Substrate contacts are provided by residues 29–32 (TGST), 85–88 (DGAD), and 98–101 (KGGG). The active-site Proton acceptor is Glu-107. Lys-125 contributes to the substrate binding site.

Belongs to the ribose 5-phosphate isomerase family. Homodimer.

The catalysed reaction is aldehydo-D-ribose 5-phosphate = D-ribulose 5-phosphate. It participates in carbohydrate degradation; pentose phosphate pathway; D-ribose 5-phosphate from D-ribulose 5-phosphate (non-oxidative stage): step 1/1. Its function is as follows. Catalyzes the reversible conversion of ribose-5-phosphate to ribulose 5-phosphate. The protein is Ribose-5-phosphate isomerase A of Staphylococcus epidermidis (strain ATCC 35984 / DSM 28319 / BCRC 17069 / CCUG 31568 / BM 3577 / RP62A).